The primary structure comprises 876 residues: Probable inactive ATP-dependent zinc metalloprotease FTSHI 2, chloroplastic (876 aa).

The tract at residues 1-20 (MACRFPLHSSSPSQFLSPEN) is disordered. The transit peptide at 1 to 32 (MACRFPLHSSSPSQFLSPENRQRLPRNYPSIS) directs the protein to the chloroplast. The span at 8 to 19 (HSSSPSQFLSPE) shows a compositional bias: polar residues. Residues 59–79 (LLAIPITLTIISASLAKPSFA) traverse the membrane as a helical segment. A disordered region spans residues 256–276 (TMKAQKKQQERKKRKAVRKKK). Basic residues predominate over residues 258 to 275 (KAQKKQQERKKRKAVRKK). A helical membrane pass occupies residues 304-324 (VATALGLVFFYIFYRVVVLNY). The interval 350 to 370 (ELEREMEGIEEEDEEVEEGTG) is disordered. Residues 357 to 368 (GIEEEDEEVEEG) show a composition bias toward acidic residues. 450-457 (GPPGVGKT) serves as a coordination point for ATP.

The protein in the N-terminal section; belongs to the AAA ATPase family. It in the C-terminal section; belongs to the peptidase M41 family. In terms of assembly, homooligomer. Interacts with FtsHi4.

The protein resides in the plastid. The protein localises to the chloroplast membrane. Functionally, required for plastid development during embryogenesis. Might be involved in chaperone functions or play a structural role in the thylakoid FtsH complex. This chain is Probable inactive ATP-dependent zinc metalloprotease FTSHI 2, chloroplastic, found in Arabidopsis thaliana (Mouse-ear cress).